The following is a 433-amino-acid chain: E3 ubiquitin-protein ligase RNF26 (433 aa).

5 consecutive transmembrane segments (helical) span residues 24–44, 60–80, 147–169, 183–203, and 220–240; these read LNFLLVSSLLASLAWLLAFVY, GVLLSLLALIEAVVRFTCGGL, VINSLVNICLIGTQNLFSLVLAL, VVAAFLAHISSSAVAMAILLW, and LASFVLVNLTGLVLLACVLAV. The RING-type zinc-finger motif lies at 380–422; that stretch reads CVICQDQSKTVLLLPCRHLCLCQACTEILMRHPVYHRNCPLCR.

As to quaternary structure, interacts with INCA1. Interacts with TMEM43, ENDOD1, TMEM33 and TMED1 to form a complex capable of modulating innate immune signaling through the cGAS-STING pathway. Interacts with UBE2J1; this interaction is important for SQSTM1 ubiquitination. Ubiquitous. Up-regulated in several cancer cell lines.

It localises to the endoplasmic reticulum membrane. It catalyses the reaction S-ubiquitinyl-[E2 ubiquitin-conjugating enzyme]-L-cysteine + [acceptor protein]-L-lysine = [E2 ubiquitin-conjugating enzyme]-L-cysteine + N(6)-ubiquitinyl-[acceptor protein]-L-lysine.. Its pathway is protein modification; protein ubiquitination. In terms of biological role, E3 ubiquitin-protein ligase that plays a key role in endosome organization by retaining vesicles in the perinuclear cloud. Acts as a platform for perinuclear positioning of the endosomal system by mediating ubiquitination of SQSTM1 through interaction with the ubiquitin conjugating enzyme UBE2J1. Ubiquitinated SQSTM1 attracts specific vesicle-associated adapters, forming a molecular bridge that restrains cognate vesicles in the perinuclear region and organizes the endosomal pathway for efficient cargo transport. Also acts as a regulator of type I interferon production in response to viral infection by mediating the formation of 'Lys-11'-linked polyubiquitin chains on TMEM173/STING, leading to stabilize TMEM173/STING. Also required to limit type I interferon response by promoting autophagic degradation of IRF3. The protein is E3 ubiquitin-protein ligase RNF26 of Homo sapiens (Human).